An 819-amino-acid chain; its full sequence is Tegument protein UL47 homolog (819 aa).

Over residues 1-15 (MQSGHYNRRQSRRQR) the composition is skewed to basic residues. Disordered stretches follow at residues 1–42 (MQSG…THPP) and 58–221 (LNSE…DYFS). Residues 11 to 31 (SRRQRISSNTTDSPRHTHGTR) carry the Nuclear localization signal motif. The span at 32–42 (YRSTNWYTHPP) shows a compositional bias: polar residues. Residues 62–72 (MDQDSSSDASD) are compositionally biased toward acidic residues. The span at 82 to 93 (STYNGSEQNTST) shows a compositional bias: polar residues. A compositionally biased stretch (basic and acidic residues) spans 94 to 109 (SRHENRIFKLTEREAN). Tandem repeats lie at residues 117 to 132 (DAID…EAEE), 133 to 148 (DAID…EAEE), 149 to 164 (DAID…EAEE), 165 to 190 (DAID…EAEE), and 191 to 206 (DAID…AAEE). The interval 117–218 (DAIDDEGEAE…IDDEGEAEED (102 aa)) is 6 X 16 AA approximate tandem repeats. The segment covering 118-219 (AIDDEGEAEE…DDEGEAEEDY (102 aa)) has biased composition (acidic residues). The stretch at 207 to 218 (DAIDDEGEAEED) is one 1-6; truncated repeat. The short motif at 785-807 (QPIPSVDLAENLMQYRNEILGLD) is the Nuclear export signal element.

Belongs to the alphaherpesvirinae HHV-1 UL47 family. In terms of assembly, interacts with US3 kinase. Interacts with ORF24 and ORF27; these interactions seem important for efficient virion nuclear egress. Interacts with ORF17/VHS. Interacts with ORF9. In terms of processing, phosphorylated by US3. This phosphorylation is required for proper nuclear localization.

The protein resides in the virion tegument. The protein localises to the host nucleus. It localises to the host cytoplasm. Functionally, tegument protein that can bind to various RNA transcripts. Plays a role in the attenuation of selective viral and cellular mRNA degradation by modulating the activity of host shutoff RNase ORF17/VHS. Also plays a role in the primary envelopment of virions in the perinuclear space, probably by interacting with two nuclear egress proteins ORF24 and ORF27. In Varicella-zoster virus (strain Dumas) (HHV-3), this protein is Tegument protein UL47 homolog.